A 304-amino-acid chain; its full sequence is uncharacterized protein (304 aa).

Catalysis depends on charge relay system residues T58 and Y121. Catalysis depends on Y147, which acts as the Proton donor. K175 serves as the catalytic Schiff-base intermediate with substrate.

The protein belongs to the DapA family. As to quaternary structure, homotetramer.

It localises to the cytoplasm. This is an uncharacterized protein from Halobacterium salinarum (strain ATCC 29341 / DSM 671 / R1).